Here is a 489-residue protein sequence, read N- to C-terminus: Pup--protein ligase (489 aa).

Mg(2+) is bound at residue Glu25. Residue Arg69 coordinates ATP. Tyr71 contributes to the Mg(2+) binding site. The active-site Proton acceptor is Asp73. Residue Glu79 coordinates Mg(2+). ATP-binding residues include Thr82 and Trp447.

It belongs to the Pup ligase/Pup deamidase family. Pup-conjugating enzyme subfamily.

It carries out the reaction ATP + [prokaryotic ubiquitin-like protein]-L-glutamate + [protein]-L-lysine = ADP + phosphate + N(6)-([prokaryotic ubiquitin-like protein]-gamma-L-glutamyl)-[protein]-L-lysine.. The protein operates within protein degradation; proteasomal Pup-dependent pathway. It participates in protein modification; protein pupylation. Catalyzes the covalent attachment of the prokaryotic ubiquitin-like protein modifier Pup to the proteasomal substrate proteins, thereby targeting them for proteasomal degradation. This tagging system is termed pupylation. The ligation reaction involves the side-chain carboxylate of the C-terminal glutamate of Pup and the side-chain amino group of a substrate lysine. The protein is Pup--protein ligase of Corynebacterium efficiens (strain DSM 44549 / YS-314 / AJ 12310 / JCM 11189 / NBRC 100395).